The following is an 828-amino-acid chain: Leucine--tRNA ligase (828 aa).

The short motif at 42–52 (PYPSGTLHVGH) is the 'HIGH' region element. Residues 582–586 (KMSKS) carry the 'KMSKS' region motif. K585 contacts ATP.

The protein belongs to the class-I aminoacyl-tRNA synthetase family.

The protein localises to the cytoplasm. The enzyme catalyses tRNA(Leu) + L-leucine + ATP = L-leucyl-tRNA(Leu) + AMP + diphosphate. The polypeptide is Leucine--tRNA ligase (Petrotoga mobilis (strain DSM 10674 / SJ95)).